A 244-amino-acid polypeptide reads, in one-letter code: MAIVTMKQLLEAGVHFGHQTRRWNPKMAPYIFTDRNGIYIIDLQKTVRKIEEAYNFIKQIVAEGQTVLFVGTKKQAQLTVVEEAGRCGMFYVNQRWLGGMLTNFQTIRRRIDRLKELEKMEAEGRFEVLPKKEVAELMHEKQRLEKYLKGIKDMTKLPGALFVIDPRKERIAVAEARKLGIPIVAIVDTNCDPDEIDYIIPGNDDAIRAVRLLTSRMADAVLEGRQGEQLAPEPDQEAVVEAEA.

It belongs to the universal ribosomal protein uS2 family.

This is Small ribosomal subunit protein uS2 from Desulforudis audaxviator (strain MP104C).